The chain runs to 443 residues: D-aminoacyl-tRNA deacylase (443 aa).

This sequence belongs to the DtdA deacylase family. Monomer. Zn(2+) is required as a cofactor.

The catalysed reaction is a D-aminoacyl-tRNA + H2O = a tRNA + a D-alpha-amino acid + H(+). It carries out the reaction glycyl-tRNA(Ala) + H2O = tRNA(Ala) + glycine + H(+). D-aminoacyl-tRNA deacylase with broad substrate specificity. By recycling D-aminoacyl-tRNA to D-amino acids and free tRNA molecules, this enzyme counteracts the toxicity associated with the formation of D-aminoacyl-tRNA entities in vivo. The chain is D-aminoacyl-tRNA deacylase from Methanocorpusculum labreanum (strain ATCC 43576 / DSM 4855 / Z).